We begin with the raw amino-acid sequence, 33 residues long: Toxin Bcg III 25.52 (33 aa).

Cys6 and Cys28 form a disulfide bridge.

Its subcellular location is the secreted. It is found in the nematocyst. This is Toxin Bcg III 25.52 from Bunodosoma cangicum (Sea anemone).